The sequence spans 251 residues: Probable metal-binding protein YrpE (251 aa).

Positions M1–A30 are cleaved as a signal peptide. Residues T25–A41 are compositionally biased toward polar residues. The disordered stretch occupies residues T25–E72. Positions S54–E72 are enriched in basic and acidic residues. 5 residues coordinate Zn(2+): H203, H212, H214, E247, and H251.

It belongs to the calycin superfamily. ZinT family.

In Bacillus subtilis (strain 168), this protein is Probable metal-binding protein YrpE (yrpE).